We begin with the raw amino-acid sequence, 611 residues long: Leukotriene A-4 hydrolase (611 aa).

N6-acetyllysine is present on lysine 73. Residues 135–137 (QCQ) and 267–272 (PYGGME) each bind a peptide. Histidine 296 lines the Zn(2+) pocket. Catalysis depends on glutamate 297, which acts as the Proton acceptor. Zn(2+)-binding residues include histidine 300 and glutamate 319. Lysine 337 carries the post-translational modification N6-acetyllysine. The Proton donor role is filled by tyrosine 384. Position 416 is a phosphoserine (serine 416). Residue 564–566 (RMK) coordinates a peptide. Residue lysine 573 is modified to N6-acetyllysine.

Belongs to the peptidase M1 family. Requires Zn(2+) as cofactor. Phosphorylation at Ser-416 inhibits enzymatic activity.

It localises to the cytoplasm. The enzyme catalyses leukotriene A4 + H2O = leukotriene B4. It participates in lipid metabolism; leukotriene B4 biosynthesis. Inhibited by bestatin. Subject to suicide inhibition by leukotriene A4. Its function is as follows. Epoxide hydrolase that catalyzes the final step in the biosynthesis of the pro-inflammatory mediator leukotriene B4. Also has aminopeptidase activity. The sequence is that of Leukotriene A-4 hydrolase (LTA4H) from Chinchilla lanigera (Long-tailed chinchilla).